The sequence spans 160 residues: uncharacterized protein (160 aa).

The signal sequence occupies residues 1–27; that stretch reads MVIGRKAGIIIYVMHALLLLLLSFTFA.

This is an uncharacterized protein from Aquifex aeolicus (strain VF5).